We begin with the raw amino-acid sequence, 252 residues long: Chitooligosaccharide deacetylase (252 aa).

A Mg(2+)-binding site is contributed by His125.

Belongs to the YdjC deacetylase family. ChbG subfamily. Homodimer. The cofactor is Mg(2+).

The protein localises to the cytoplasm. It carries out the reaction N,N'-diacetylchitobiose + H2O = N-acetyl-beta-D-glucosaminyl-(1-&gt;4)-D-glucosamine + acetate. The catalysed reaction is diacetylchitobiose-6'-phosphate + H2O = N'-monoacetylchitobiose-6'-phosphate + acetate. Its pathway is glycan degradation; chitin degradation. Functionally, involved in the degradation of chitin. ChbG is essential for growth on the acetylated chitooligosaccharides chitobiose and chitotriose but is dispensable for growth on cellobiose and chitosan dimer, the deacetylated form of chitobiose. Deacetylation of chitobiose-6-P and chitotriose-6-P is necessary for both the activation of the chb promoter by the regulatory protein ChbR and the hydrolysis of phosphorylated beta-glucosides by the phospho-beta-glucosidase ChbF. Catalyzes the removal of only one acetyl group from chitobiose-6-P to yield monoacetylchitobiose-6-P, the inducer of ChbR and the substrate of ChbF. The sequence is that of Chitooligosaccharide deacetylase from Escherichia coli O157:H7.